Reading from the N-terminus, the 259-residue chain is Haloacid dehalogenase-like hydrolase domain-containing protein 2 (259 aa).

Residues aspartate 13 and serine 15 each contribute to the Mg(2+) site. Residues 13 to 15 (DLS) and 46 to 47 (TN) each bind substrate. The stretch at 47–71 (NTTKESKQDLLERLKKLEFDISEDE) forms a coiled coil. Position 50 is an N6-succinyllysine (lysine 50). Lysine 179 contributes to the substrate binding site. Aspartate 204 lines the Mg(2+) pocket.

It belongs to the HAD-like hydrolase superfamily. The cofactor is Mg(2+).

The chain is Haloacid dehalogenase-like hydrolase domain-containing protein 2 (HDHD2) from Bos taurus (Bovine).